The sequence spans 321 residues: Olfactory receptor 52N4 (321 aa).

Residues 1–27 (MLTLNKTDLIPASFILNGVPGLEDTQL) lie on the Extracellular side of the membrane. N-linked (GlcNAc...) asparagine glycosylation is present at Asn5. A helical membrane pass occupies residues 28–48 (WISFPFCSMYVVAMVGNCGLL). Over 49–56 (YLIHYEDA) the chain is Cytoplasmic. The chain crosses the membrane as a helical span at residues 57–77 (LHKPMYYFLAMLSFTDLVMCS). The Extracellular portion of the chain corresponds to 78–101 (STIPKALCIFWFHLKDIGFDECLV). Cys99 and Cys191 are disulfide-bonded. Residues 102–122 (QMFFTHTFTGMESGVLMLMAL) traverse the membrane as a helical segment. The Cytoplasmic segment spans residues 123–141 (DRYVAICYPLRYSTILTNP). A helical transmembrane segment spans residues 142-162 (VIAKVGTATFLRGVLLIIPFT). At 163–198 (FLTKLLPYCRGNILPHTYCDHMSVAKLSCGNVKVNA) the chain is on the extracellular side. The chain crosses the membrane as a helical span at residues 199–219 (IYGLMVALLIWGFDILCITNS). The Cytoplasmic segment spans residues 220 to 239 (YTMILRAVVSLSSADARQKA). The chain crosses the membrane as a helical span at residues 240 to 260 (FNTCTAHICAIVFSYTPAFFS). Over 261–276 (FFSHRFGEHIIPPSCH) the chain is Extracellular. The helical transmembrane segment at 277 to 297 (IIVANIYLLLPPTMNPIVYGV) threads the bilayer. Over 298 to 321 (KTKQIRDCVIRILSGSKDTKSYSM) the chain is Cytoplasmic.

It belongs to the G-protein coupled receptor 1 family.

Its subcellular location is the cell membrane. Odorant receptor. In Homo sapiens (Human), this protein is Olfactory receptor 52N4 (OR52N4).